The primary structure comprises 411 residues: Carbohydrate sulfotransferase 5 (411 aa).

The Cytoplasmic portion of the chain corresponds to Met1–Lys30. The helical; Signal-anchor for type II membrane protein transmembrane segment at Thr31–Ile48 threads the bilayer. Residues Ser49–Asp411 are Lumenal-facing. Trp71–Phe77 provides a ligand contact to 3'-phosphoadenylyl sulfate. N-linked (GlcNAc...) asparagine glycosylation is present at Asn138. Residue Arg224 to Ser232 coordinates 3'-phosphoadenylyl sulfate. Asn327 and Asn350 each carry an N-linked (GlcNAc...) asparagine glycan.

Belongs to the sulfotransferase 1 family. Gal/GlcNAc/GalNAc subfamily. Predominantly expressed in small and large intestines and colon. Weakly expressed in lymphocytes. Not expressed in other tissues. Down-regulated in colonic adenocarcinomas.

It localises to the golgi apparatus membrane. In terms of biological role, sulfotransferase that utilizes 3'-phospho-5'-adenylyl sulfate (PAPS) as sulfonate donor to catalyze the transfer of sulfate to position 6 of non-reducing N-acetylglucosamine (GlcNAc) residues and O-linked sugars of mucin-type acceptors. Acts on the non-reducing terminal GlcNAc of short carbohydrate substrates. However, it does not transfer sulfate to longer carbohydrate substrates that have poly-N-acetyllactosamine structures. Has no activity toward keratan. Not involved in generating HEV-expressed ligands for SELL. Its substrate specificity may be influenced by its subcellular location. In Homo sapiens (Human), this protein is Carbohydrate sulfotransferase 5 (CHST5).